A 574-amino-acid polypeptide reads, in one-letter code: Lengsin (574 aa).

Disordered stretches follow at residues Met-1–Lys-36 and Gly-66–Thr-131. Positions Asn-11 to Arg-23 are enriched in basic and acidic residues. Residues Ser-25 to Lys-36 are compositionally biased toward basic residues. Positions Asn-91–Thr-131 are enriched in polar residues. In terms of domain architecture, GS beta-grasp spans Asn-148–Gly-242. The GS catalytic domain maps to Pro-249 to Ile-574.

It belongs to the glutamine synthetase family. As to quaternary structure, dodecamer. Interacts with BFSP2 and VIM.

In terms of biological role, may act as a component of the cytoskeleton or as a chaperone for the reorganization of intermediate filament proteins during terminal differentiation in the lens. Does not seem to have enzymatic activity. The protein is Lengsin (LGSN) of Canis lupus familiaris (Dog).